The primary structure comprises 374 residues: uncharacterized protein (374 aa).

Residues 39–66 (RDVRKHLESRDAKQELIDSLEEAVRDSR) are a coiled coil.

This is an uncharacterized protein from Mycobacterium tuberculosis (strain CDC 1551 / Oshkosh).